A 257-amino-acid polypeptide reads, in one-letter code: UPF0246 protein lpg1366 (257 aa).

It belongs to the UPF0246 family.

This chain is UPF0246 protein lpg1366, found in Legionella pneumophila subsp. pneumophila (strain Philadelphia 1 / ATCC 33152 / DSM 7513).